Reading from the N-terminus, the 527-residue chain is Cytochrome b5 reductase 4 (527 aa).

Positions 1–24 (MLNVPSQAFPAAGSQQRVAPAGQS) are disordered. A Cytochrome b5 heme-binding domain is found at 56–132 (LIEVTEDELK…LKECLVGRMA (77 aa)). The heme site is built by His-91 and His-114. The tract at residues 138 to 171 (ALQAHTEKTESTHLNGLSAPPSLRPEPLSAPLPA) is disordered. The CS domain maps to 173–264 (DHRPRYDWFQ…SVKEKWTQLG (92 aa)). One can recognise an FAD-binding FR-type domain in the interval 281 to 392 (LFYRECVLLS…GGPEGSFTLR (112 aa)). Residues 372 to 387 (ANLP…GPEG) and 399 to 431 (HLYM…KMKL) contribute to the FAD site.

It belongs to the flavoprotein pyridine nucleotide cytochrome reductase family. The cofactor is FAD.

It is found in the endoplasmic reticulum. It catalyses the reaction 2 Fe(III)-[cytochrome b5] + NADH = 2 Fe(II)-[cytochrome b5] + NAD(+) + H(+). Functionally, NADH-cytochrome b5 reductase involved in endoplasmic reticulum stress response pathway. The polypeptide is Cytochrome b5 reductase 4 (cyb5r4) (Danio rerio (Zebrafish)).